The following is a 118-amino-acid chain: Vesicle-associated membrane protein 1 (118 aa).

Positions 1–36 (MSAPAQPPAEGTEGTAPGGGPPGPPPNMTSNRRLQQ) are disordered. Residues 1-96 (MSAPAQPPAE…KRKYWWKNCK (96 aa)) lie on the Cytoplasmic side of the membrane. Residues 33–93 (RLQQTQAQVE…AKLKRKYWWK (61 aa)) form the v-SNARE coiled-coil homology domain. The residue at position 63 (Ser-63) is a Phosphoserine. Residues 97–116 (MMIMLGAICAIIVVVIVIYF) traverse the membrane as a helical; Anchor for type IV membrane protein segment. Over 117–118 (FT) the chain is Vesicular.

The protein belongs to the synaptobrevin family. Interacts with VAPA and VAPB. In terms of processing, (Microbial infection) Targeted and hydrolyzed by C.botulinum neurotoxin type B (BoNT/B, botB) which probably hydrolyzes the 78-Gln-|-Phe-79 bond and inhibits neurotransmitter release. (Microbial infection) Targeted and hydrolyzed by C.botulinum neurotoxin type D (BoNT/D, botD) which probably hydrolyzes the 61-Arg-|-Leu-62 bond and inhibits neurotransmitter release. BoNT/D has low catalytic activity on this protein due to its sequence. Note that humans are not known to be infected by C.botulinum type D. Post-translationally, (Microbial infection) Targeted and hydrolyzed by C.botulinum neurotoxin type F (BoNT/F, botF) which probably hydrolyzes the 60-Gln-|-Lys-61 bond and inhibits neurotransmitter release. In terms of processing, (Microbial infection) Targeted and hydrolyzed by C.botulinum neurotoxin type X (BoNT/X) which probably hydrolyzes the 68-Arg-|-Ala-69 bond and inhibits neurotransmitter release. It remains unknown whether BoNT/X is ever produced, or what organisms it targets. Nervous system, skeletal muscle and adipose tissue.

It is found in the cytoplasmic vesicle. The protein localises to the secretory vesicle. It localises to the synaptic vesicle membrane. The protein resides in the synapse. Its subcellular location is the synaptosome. It is found in the cytoplasmic vesicle membrane. The protein localises to the mitochondrion outer membrane. Functionally, involved in the targeting and/or fusion of transport vesicles to their target membrane. This is Vesicle-associated membrane protein 1 (VAMP1) from Homo sapiens (Human).